A 449-amino-acid chain; its full sequence is Serum response factor homolog (449 aa).

The interval 23–166 (LADPADMYGN…PPANGKKTKG (144 aa)) is disordered. Residues 69-80 (QCQTLHSPQHAS) show a composition bias toward polar residues. The span at 81-107 (QQQQQQQQQQQQHQQQQQQQQQHPQQQ) shows a compositional bias: low complexity. Phosphoserine is present on Ser-156. One can recognise an MADS-box domain in the interval 167 to 225 (RVKIKMEYIDNKLRRYTTFSKRKTGIMKKAYELSTLTGTQVMLLVASETGHVYTFATRK). 2 disordered regions span residues 270–360 (YNIA…GGGS) and 418–449 (LTAS…QEFD). 2 stretches are compositionally biased toward low complexity: residues 317–331 (SAPP…TASS) and 345–354 (TNSGPSTSTA).

As to expression, after germ band retraction, high levels of zygotic expression are observed in a distinct subset of peripheral tracheal cells distributed throughout the embryo and low levels in somatic muscle. Expressed in the future intervein tissue of the wing imaginal disk from the third instar larvae until eclosion of the adult fly (at protein level).

It localises to the nucleus. In terms of biological role, required for the formation of intervein tissue of the wing. Acts in a dosage-dependent manner to suppress wing vein formation and promote development of intervein cells. Might play a role in the proper formation and maintenance of the trachea. The chain is Serum response factor homolog (bs) from Drosophila melanogaster (Fruit fly).